The chain runs to 578 residues: Zinc finger-containing ubiquitin peptidase 1 (578 aa).

The C2H2-type 1 zinc finger occupies 2–24; the sequence is LSCNICGETVTSEPDMKAHLIVH. A C2H2-type 2; atypical zinc finger spans residues 29–52; the sequence is IICPFCKLSGVNYDEMCFHIETAH. 2 C2H2-type zinc fingers span residues 154–177 and 193–215; these read PECPFCGKIEEHSEDMETHVKTKH and YDCPMCGLICTNYHILQEHVDLH. Positions 226–248 are MIU; it reads DRVQCSGDLQLAHQLQQEEDRKR. The segment at 249-274 is zUBD/ZHA; that stretch reads RSEESRQEIEEFQKLQRQYGLDNSGG. The residue at position 262 (Lys262) is an N6-acetyllysine. Residue Cys360 is the Nucleophile of the active site. The Proton acceptor role is filled by His491. Residue Asp512 is part of the active site.

This sequence belongs to the peptidase C78 family. ZUFSP subfamily. Interacts with RPA1 and RPA2.

Its subcellular location is the cytoplasm. It localises to the nucleus. The enzyme catalyses Thiol-dependent hydrolysis of ester, thioester, amide, peptide and isopeptide bonds formed by the C-terminal Gly of ubiquitin (a 76-residue protein attached to proteins as an intracellular targeting signal).. Its function is as follows. Deubiquitinase with endodeubiquitinase activity that specifically interacts with and cleaves 'Lys-63'-linked long polyubiquitin chains. Shows only weak activity against 'Lys-11' and 'Lys-48'-linked chains. Plays an important role in genome stability pathways, functioning to prevent spontaneous DNA damage and also promote cellular survival in response to exogenous DNA damage. Modulates the ubiquitination status of replication protein A (RPA) complex proteins in response to replication stress. This Homo sapiens (Human) protein is Zinc finger-containing ubiquitin peptidase 1.